Here is a 178-residue protein sequence, read N- to C-terminus: MRKHLGGCWLAIVCVLLFSQLSSVKARGIKHRIKWNRKVLPSTSQVTEAHTAEIRPGAFIKQGRKLDINFGVEGNRYYEANYWQFPDGIHYNGCSEANVTKEKFVTSCINATQVANQEELSREKQDNKLYQRVLWQLIRELCSIKHCDFWLERGAGLQVTLDQPMMLCLLVFIWFIVK.

Positions 1-25 (MRKHLGGCWLAIVCVLLFSQLSSVK) are cleaved as a signal peptide. Residues 27 to 50 (RGIKHRIKWNRKVLPSTSQVTEAH) form a flexible tail region. Positions 51-154 (TAEIRPGAFI…KHCDFWLERG (104 aa)) are globular. Disulfide bonds link Cys94-Cys147 and Cys108-Cys142. 2 N-linked (GlcNAc...) asparagine glycosylation sites follow: Asn98 and Asn110. The interval 124–141 (KQDNKLYQRVLWQLIREL) is cu(2+) binding. A lipid anchor (GPI-anchor amidated glycine) is attached at Gly154. The propeptide at 155 to 178 (AGLQVTLDQPMMLCLLVFIWFIVK) is removed in mature form.

Belongs to the prion family. In terms of processing, N-glycosylated. Post-translationally, O-glycosylated. Strongly expressed in testis. Detected at low levels in lymph node, spleen and ovary.

The protein localises to the cell membrane. Required for normal acrosome reaction and for normal male fertility. Can bind Cu(2+). The sequence is that of Prion-like protein doppel (PRND) from Ovis aries (Sheep).